Reading from the N-terminus, the 94-residue chain is Large ribosomal subunit protein bL25 (94 aa).

It belongs to the bacterial ribosomal protein bL25 family. As to quaternary structure, part of the 50S ribosomal subunit; part of the 5S rRNA/L5/L18/L25 subcomplex. Contacts the 5S rRNA. Binds to the 5S rRNA independently of L5 and L18.

Functionally, this is one of the proteins that binds to the 5S RNA in the ribosome where it forms part of the central protuberance. The protein is Large ribosomal subunit protein bL25 of Edwardsiella ictaluri (strain 93-146).